Consider the following 237-residue polypeptide: Cuticlin-like protein 19 (237 aa).

A signal peptide spans 1–20; the sequence is MVEYNRIFCVLVIFSTTIKC.

In terms of assembly, interacts with vps-51 and vps-52. As to expression, expression detected in motor neurons.

It localises to the golgi apparatus. Its subcellular location is the trans-Golgi network. This chain is Cuticlin-like protein 19 (cutl-19), found in Caenorhabditis elegans.